The sequence spans 1202 residues: DNA polymerase beta (1202 aa).

3 tandem repeats follow at residues 1071 to 1074 (AGNP), 1075 to 1078 (AGNP), and 1079 to 1082 (AGNA). Residues 1071–1082 (AGNPAGNPAGNA) are 3 X 4 AA tandem repeats of A-G-[NK]-[PA].

It belongs to the DNA polymerase type-B family.

The enzyme catalyses DNA(n) + a 2'-deoxyribonucleoside 5'-triphosphate = DNA(n+1) + diphosphate. DNA-directed DNA polymerase involved in viral DNA replication. The sequence is that of DNA polymerase beta (DPOL) from Ornithodoros (relapsing fever ticks).